A 351-amino-acid chain; its full sequence is Dihydroorotate dehydrogenase (quinone) (351 aa).

FMN is bound by residues 61-65 (AGLDK) and threonine 85. Lysine 65 provides a ligand contact to substrate. Residue 110-114 (NRMGF) coordinates substrate. Residues asparagine 139 and asparagine 172 each contribute to the FMN site. Asparagine 172 serves as a coordination point for substrate. The Nucleophile role is filled by serine 175. Position 177 (asparagine 177) interacts with substrate. Residues lysine 217 and threonine 245 each coordinate FMN. Residue 246-247 (NT) coordinates substrate. Residues glycine 268, glycine 297, and 318–319 (YT) contribute to the FMN site.

This sequence belongs to the dihydroorotate dehydrogenase family. Type 2 subfamily. As to quaternary structure, monomer. It depends on FMN as a cofactor.

The protein resides in the cell membrane. It catalyses the reaction (S)-dihydroorotate + a quinone = orotate + a quinol. It participates in pyrimidine metabolism; UMP biosynthesis via de novo pathway; orotate from (S)-dihydroorotate (quinone route): step 1/1. Functionally, catalyzes the conversion of dihydroorotate to orotate with quinone as electron acceptor. The protein is Dihydroorotate dehydrogenase (quinone) of Xylella fastidiosa (strain M23).